A 332-amino-acid chain; its full sequence is tRNA-dihydrouridine(20/20a) synthase (332 aa).

Residues 22-24 (PMM) and Gln-75 contribute to the FMN site. The active-site Proton donor is the Cys-105. FMN is bound by residues Lys-144, His-177, 217–219 (NGG), and 239–240 (GR).

This sequence belongs to the Dus family. DusA subfamily. It depends on FMN as a cofactor.

The catalysed reaction is 5,6-dihydrouridine(20) in tRNA + NADP(+) = uridine(20) in tRNA + NADPH + H(+). It carries out the reaction 5,6-dihydrouridine(20) in tRNA + NAD(+) = uridine(20) in tRNA + NADH + H(+). The enzyme catalyses 5,6-dihydrouridine(20a) in tRNA + NADP(+) = uridine(20a) in tRNA + NADPH + H(+). It catalyses the reaction 5,6-dihydrouridine(20a) in tRNA + NAD(+) = uridine(20a) in tRNA + NADH + H(+). Catalyzes the synthesis of 5,6-dihydrouridine (D), a modified base found in the D-loop of most tRNAs, via the reduction of the C5-C6 double bond in target uridines. Specifically modifies U20 and U20a in tRNAs. This Xylella fastidiosa (strain Temecula1 / ATCC 700964) protein is tRNA-dihydrouridine(20/20a) synthase.